We begin with the raw amino-acid sequence, 64 residues long: Delta-buthitoxin-Hj2a (64 aa).

Cystine bridges form between C12-C63, C16-C36, C22-C46, and C26-C48. Residue R64 is modified to Arginine amide.

Belongs to the long (4 C-C) scorpion toxin superfamily. Sodium channel inhibitor family. Alpha subfamily. In terms of tissue distribution, expressed by the venom gland.

Its subcellular location is the secreted. This non-amidated recombinant toxin slows fast inactivation on Nav1.1/SCN1A (EC(50)=52.8 nM), Nav1.4/SN4A (EC(50)=32 nM), Nav1.5/SCN5A (EC(50)=116.7 nM), Nav1.6/SCN8A (EC(50)=46.3 nM), and Nav1.7/SCN9A (EC(50)=147.4 nM) voltage-gated sodium channels. On Nav1.1/SCN1A channel, acts as an agonist by inducing a shift in both the voltage dependence of channel inactivation (alpha-toxin activity) and activation (beta-toxin activity). In Hottentotta judaicus (Black scorpion), this protein is Delta-buthitoxin-Hj2a.